Reading from the N-terminus, the 347-residue chain is Histidinol-phosphate aminotransferase (347 aa).

Residue K209 is modified to N6-(pyridoxal phosphate)lysine.

The protein belongs to the class-II pyridoxal-phosphate-dependent aminotransferase family. Histidinol-phosphate aminotransferase subfamily. Homodimer. The cofactor is pyridoxal 5'-phosphate.

It catalyses the reaction L-histidinol phosphate + 2-oxoglutarate = 3-(imidazol-4-yl)-2-oxopropyl phosphate + L-glutamate. It participates in amino-acid biosynthesis; L-histidine biosynthesis; L-histidine from 5-phospho-alpha-D-ribose 1-diphosphate: step 7/9. The sequence is that of Histidinol-phosphate aminotransferase from Syntrophotalea carbinolica (strain DSM 2380 / NBRC 103641 / GraBd1) (Pelobacter carbinolicus).